A 94-amino-acid chain; its full sequence is Signal peptidase complex subunit 1 (94 aa).

The residue at position 2 (S2) is an N-acetylserine. Residues 2–28 (SEILQDVQRKLVFPIDFPSQRKTEKFQ) are Cytoplasmic-facing. A helical transmembrane segment spans residues 29–49 (QLSLMIGALVACILGFAQQSL). Residue K50 is a topological domain, lumenal. A helical membrane pass occupies residues 51–71 (VLLTAYGISCVITLICVLPAY). Over 72–94 (PWYNKQKLRWAQPKIEINVDQYD) the chain is Cytoplasmic.

The protein belongs to the SPCS1 family. In terms of assembly, component of the signal peptidase complex (SPC) composed of a catalytic subunit SEC11 and three accessory subunits SPC1, SPC2 and SPC3. The complex induces a local thinning of the ER membrane which is used to measure the length of the signal peptide (SP) h-region of protein substrates. This ensures the selectivity of the complex towards h-regions shorter than 18-20 amino acids. SPC associates with the translocon complex. Interacts with SBH1 and SEB2/SBH2.

It localises to the endoplasmic reticulum membrane. Its function is as follows. Component of the signal peptidase complex (SPC) which catalyzes the cleavage of N-terminal signal sequences from nascent proteins as they are translocated into the lumen of the endoplasmic reticulum. Dispensable for SPC enzymatic activity. This is Signal peptidase complex subunit 1 (SPC1) from Saccharomyces cerevisiae (strain ATCC 204508 / S288c) (Baker's yeast).